The primary structure comprises 599 residues: DNA primase (599 aa).

Residues C40–C64 form a CHC2-type zinc finger. Residues N259–D342 enclose the Toprim domain. Positions 265, 309, and 311 each coordinate Mg(2+).

It belongs to the DnaG primase family. As to quaternary structure, monomer. Interacts with DnaB. The cofactor is Zn(2+). Requires Mg(2+) as cofactor.

The enzyme catalyses ssDNA + n NTP = ssDNA/pppN(pN)n-1 hybrid + (n-1) diphosphate.. Its function is as follows. RNA polymerase that catalyzes the synthesis of short RNA molecules used as primers for DNA polymerase during DNA replication. This Halalkalibacterium halodurans (strain ATCC BAA-125 / DSM 18197 / FERM 7344 / JCM 9153 / C-125) (Bacillus halodurans) protein is DNA primase.